The following is a 246-amino-acid chain: MNAQREPSGLERLEQALDYRFTQSDLLQLALTHRSAPLDGSKAGEVVATTHNERLEFLGDSVLNLIVSHRLYKRFGEVPEGQLSQWRAMLVNTRSLSEVAKDLELGRYLRMGRGEAKSGGREKYSILGNALEALLGAIYLDGGFEAAERVVDRLFAHQVAGIEPEQQGKDYKTLLQEYLQARGEALPIYAVLSAEGPPHERVFVVSCHPREQLCGHGQGRSKREAEQHAAQQALELLIESENEHHD.

The RNase III domain maps to 10-143 (LERLEQALDY…LLGAIYLDGG (134 aa)). E56 contributes to the Mg(2+) binding site. D60 is an active-site residue. Residues N129 and E132 each contribute to the Mg(2+) site. E132 is an active-site residue. One can recognise a DRBM domain in the interval 170 to 239 (DYKTLLQEYL…AQQALELLIE (70 aa)).

The protein belongs to the ribonuclease III family. As to quaternary structure, homodimer. The cofactor is Mg(2+).

Its subcellular location is the cytoplasm. It catalyses the reaction Endonucleolytic cleavage to 5'-phosphomonoester.. Digests double-stranded RNA. Involved in the processing of primary rRNA transcript to yield the immediate precursors to the large and small rRNAs (23S and 16S). Processes some mRNAs, and tRNAs when they are encoded in the rRNA operon. Processes pre-crRNA and tracrRNA of type II CRISPR loci if present in the organism. The polypeptide is Ribonuclease 3 (Magnetococcus marinus (strain ATCC BAA-1437 / JCM 17883 / MC-1)).